Here is a 395-residue protein sequence, read N- to C-terminus: Protein PELOTA 2 (395 aa).

The protein belongs to the eukaryotic release factor 1 family. Pelota subfamily. Requires a divalent metal cation as cofactor.

The protein resides in the cytoplasm. It localises to the nucleus. Component of the Pelota-HBS1L complex, a complex that recognizes stalled ribosomes and triggers the No-Go Decay (NGD) pathway. In the Pelota-HBS1L complex, pelo recognizes ribosomes stalled at the 3' end of an mRNA and engages stalled ribosomes by destabilizing mRNA in the mRNA channel. Following ribosome-binding, the Pelota-HBS1L complex promotes the disassembly of stalled ribosomes, followed by degradation of damaged mRNAs as part of the NGD pathway. In Arabidopsis thaliana (Mouse-ear cress), this protein is Protein PELOTA 2 (PEL2).